We begin with the raw amino-acid sequence, 134 residues long: ATP synthase epsilon chain (134 aa).

It belongs to the ATPase epsilon chain family. F-type ATPases have 2 components, CF(1) - the catalytic core - and CF(0) - the membrane proton channel. CF(1) has five subunits: alpha(3), beta(3), gamma(1), delta(1), epsilon(1). CF(0) has three main subunits: a, b and c.

Its subcellular location is the cell inner membrane. In terms of biological role, produces ATP from ADP in the presence of a proton gradient across the membrane. This Solibacter usitatus (strain Ellin6076) protein is ATP synthase epsilon chain.